Here is a 340-residue protein sequence, read N- to C-terminus: tRNA N6-adenosine threonylcarbamoyltransferase (340 aa).

Fe cation-binding residues include histidine 111 and histidine 115. Residues 134 to 138 (LVSGG), aspartate 167, glycine 180, and asparagine 276 contribute to the substrate site. Aspartate 304 lines the Fe cation pocket.

This sequence belongs to the KAE1 / TsaD family. The cofactor is Fe(2+).

The protein localises to the cytoplasm. The enzyme catalyses L-threonylcarbamoyladenylate + adenosine(37) in tRNA = N(6)-L-threonylcarbamoyladenosine(37) in tRNA + AMP + H(+). Functionally, required for the formation of a threonylcarbamoyl group on adenosine at position 37 (t(6)A37) in tRNAs that read codons beginning with adenine. Is involved in the transfer of the threonylcarbamoyl moiety of threonylcarbamoyl-AMP (TC-AMP) to the N6 group of A37, together with TsaE and TsaB. TsaD likely plays a direct catalytic role in this reaction. The chain is tRNA N6-adenosine threonylcarbamoyltransferase from Helicobacter pylori (strain J99 / ATCC 700824) (Campylobacter pylori J99).